The chain runs to 125 residues: Small ribosomal subunit protein uS12m (125 aa).

The segment at 1–51 (MPTKNQLIRHGREEKRRTDRTRALDQCPQKQGVCPRVSTRTPKKPNSAPRK) is disordered. The segment covering 10–23 (HGREEKRRTDRTRA) has biased composition (basic and acidic residues).

Belongs to the universal ribosomal protein uS12 family.

It is found in the mitochondrion. Its function is as follows. Protein S12 is involved in the translation initiation step. In Nicotiana sylvestris (Wood tobacco), this protein is Small ribosomal subunit protein uS12m (RPS12).